Here is a 168-residue protein sequence, read N- to C-terminus: Cell division inhibitor SulA (168 aa).

The tract at residues 105-111 is ftsZ binding; the sequence is ALETGNY. The interval 161–168 is lon protease binding; that stretch reads RIHSGMVH.

It belongs to the SulA family. Interacts with FtsZ. Is rapidly cleaved and degraded by the Lon protease once DNA damage is repaired.

Component of the SOS system and an inhibitor of cell division. Accumulation of SulA causes rapid cessation of cell division and the appearance of long, non-septate filaments. In the presence of GTP, binds a polymerization-competent form of FtsZ in a 1:1 ratio, thus inhibiting FtsZ polymerization and therefore preventing it from participating in the assembly of the Z ring. This mechanism prevents the premature segregation of damaged DNA to daughter cells during cell division. This is Cell division inhibitor SulA from Cronobacter sakazakii (strain ATCC BAA-894) (Enterobacter sakazakii).